Consider the following 353-residue polypeptide: Phospho-furanose lactonase (353 aa).

The Zn(2+) site is built by histidine 25, histidine 27, lysine 153, histidine 186, and histidine 214. N6-carboxylysine is present on lysine 153. 244 to 245 (KY) contacts substrate. Aspartate 272 provides a ligand contact to Zn(2+). 275 to 278 (RILY) serves as a coordination point for substrate.

The protein belongs to the metallo-dependent hydrolases superfamily. Phosphotriesterase family. It depends on Zn(2+) as a cofactor.

The enzyme catalyses a 1,4-lactone + H2O = a 4-hydroxyacid + H(+). It carries out the reaction D-xylono-1,4-lactone 5-phosphate + H2O = 5-phospho-D-xylonate + H(+). The catalysed reaction is L-arabino-1,4-lactone 5-phosphate + H2O = 5-phospho-L-arabinonate + H(+). Functionally, catalyzes the hydrolysis of D-xylono-1,4-lactone-5-phosphate and L-arabino-1,4-lactone-5-phosphate. Also able to hydrolyze carboxy 1,4-lactones. This chain is Phospho-furanose lactonase, found in Mycoplasmopsis agalactiae (strain NCTC 10123 / CIP 59.7 / PG2) (Mycoplasma agalactiae).